A 331-amino-acid polypeptide reads, in one-letter code: MKQTVYIASPESQQIHVWNLNHEGALTLTQVVDVPGQVQPMVVSPDKRYLYVGVRPEFRVLAYRIAPDDGALTFAAESALPGSPTHISTDHQGQFVFVGSYNAGNVSVTRLEDGLPVGVVDVVEGLDGCHSANISPDNRTLWVPALKQDRICLFTVSDDGHLVAQDPAEVTTVEGAGPRHMVFHPNEQYAYCVNELNSSVDVWELKDPHGNIECVQTLDMMPENFSDTCWAADIHITPDGRHLYACDRTASLITVFSVSEDGSVLSKEGFQPTETQPRGFNVDHSGKYLIVAGQKSHHISVYEIVGEQGLLHEKGRYAVGQGPMWVVVNAH.

Position 287 is an N6-acetyllysine (Lys-287).

The protein belongs to the cycloisomerase 2 family.

It catalyses the reaction 6-phospho-D-glucono-1,5-lactone + H2O = 6-phospho-D-gluconate + H(+). The protein operates within carbohydrate degradation; pentose phosphate pathway; D-ribulose 5-phosphate from D-glucose 6-phosphate (oxidative stage): step 2/3. In terms of biological role, catalyzes the hydrolysis of 6-phosphogluconolactone to 6-phosphogluconate. In Shigella sonnei (strain Ss046), this protein is 6-phosphogluconolactonase.